A 442-amino-acid polypeptide reads, in one-letter code: tRNA modification GTPase MnmE (442 aa).

(6S)-5-formyl-5,6,7,8-tetrahydrofolate is bound by residues Arg24, Glu82, and Lys120. Residues 217-367 form the TrmE-type G domain; the sequence is GLHIVITGEP…LISLIKEKAE (151 aa). Residues 227-232, 246-252, and 271-274 contribute to the GTP site; these read NVGKST, SEYAGTT, and DTAG. 2 residues coordinate Mg(2+): Ser231 and Thr252. Residue Lys442 participates in (6S)-5-formyl-5,6,7,8-tetrahydrofolate binding.

This sequence belongs to the TRAFAC class TrmE-Era-EngA-EngB-Septin-like GTPase superfamily. TrmE GTPase family. As to quaternary structure, homodimer. Heterotetramer of two MnmE and two MnmG subunits. Requires K(+) as cofactor.

It localises to the cytoplasm. In terms of biological role, exhibits a very high intrinsic GTPase hydrolysis rate. Involved in the addition of a carboxymethylaminomethyl (cmnm) group at the wobble position (U34) of certain tRNAs, forming tRNA-cmnm(5)s(2)U34. The protein is tRNA modification GTPase MnmE of Wolbachia sp. subsp. Drosophila simulans (strain wRi).